The primary structure comprises 274 residues: 2,3,4,5-tetrahydropyridine-2,6-dicarboxylate N-succinyltransferase (274 aa).

Substrate is bound by residues R104 and D141.

Belongs to the transferase hexapeptide repeat family. As to quaternary structure, homotrimer.

The protein resides in the cytoplasm. The enzyme catalyses (S)-2,3,4,5-tetrahydrodipicolinate + succinyl-CoA + H2O = (S)-2-succinylamino-6-oxoheptanedioate + CoA. Its pathway is amino-acid biosynthesis; L-lysine biosynthesis via DAP pathway; LL-2,6-diaminopimelate from (S)-tetrahydrodipicolinate (succinylase route): step 1/3. The polypeptide is 2,3,4,5-tetrahydropyridine-2,6-dicarboxylate N-succinyltransferase (dapD) (Escherichia coli O157:H7).